Reading from the N-terminus, the 2813-residue chain is von Willebrand factor (2813 aa).

A signal peptide spans 1 to 22 (MIPARFAGVLLALALILPGTLC). The VWFD 1 domain occupies 33 to 201 (ARCSLFGSDF…ALSSGEQWCE (169 aa)). 2 disulfides stabilise this stretch: cysteine 35–cysteine 162 and cysteine 57–cysteine 200. 3 N-linked (GlcNAc...) asparagine glycosylation sites follow: asparagine 99, asparagine 156, and asparagine 211. Positions 295–348 (CPAGMEYRQCVSPCARTCQSLHINEMCQERCVDGCSCPEGQLLDEGLCVESTEC) constitute a TIL 1 domain. The VWFD 2 domain occupies 386-560 (GECLVTGQSH…NAWKLHGDCQ (175 aa)). 3 disulfides stabilise this stretch: cysteine 388–cysteine 524, cysteine 410–cysteine 559, and cysteine 432–cysteine 440. TIL domains follow at residues 652-707 (CPKG…KAQC) and 776-827 (CPAD…LERC). Residue asparagine 666 is glycosylated (N-linked (GlcNAc...) asparagine). Residues 764–787 (SLSCRPPMVKLVCPADNLRAEGLE) are amino-terminal. Cystine bridges form between cysteine 767–cysteine 808, cysteine 776–cysteine 804, and cysteine 810–cysteine 821. Residues 788–833 (CTKTCQNYDLECMSMGCVSGCLCPPGMVRHENRCVALERCPCFHQG) are E1. The interval 826-853 (RCPCFHQGKEYAPGETVKIGCNTCVCQD) is CX. Asparagine 857 carries an N-linked (GlcNAc...) asparagine glycan. Residues 865–1032 (ATCSTIGMAH…NSWKVSSQCA (168 aa)) form the VWFD 3 domain. Disulfide bonds link cysteine 867–cysteine 996, cysteine 889–cysteine 1031, cysteine 898–cysteine 993, cysteine 914–cysteine 921, cysteine 1060–cysteine 1084, cysteine 1071–cysteine 1111, cysteine 1089–cysteine 1091, and cysteine 1126–cysteine 1130. Positions 1146–1196 (YNSCAPACQVTCQHPEPLACPVQCVEGCHAHCPPGKILDELLQTCVDPEDC) constitute a TIL 4 domain. Asparagine 1147 carries N-linked (GlcNAc...) asparagine; atypical glycosylation. Disulfide bonds link cysteine 1149–cysteine 1169, cysteine 1153–cysteine 1165, and cysteine 1196–cysteine 1199. Asparagine 1231 carries N-linked (GlcNAc...) asparagine glycosylation. A disulfide bridge links cysteine 1234 with cysteine 1237. 3 O-linked (GalNAc...) threonine glycosylation sites follow: threonine 1248, threonine 1255, and threonine 1256. Serine 1263 carries O-linked (GalNAc...) serine glycosylation. Residues cysteine 1272 and cysteine 1458 are joined by a disulfide bond. The VWFA 1; binding site for platelet glycoprotein Ib domain maps to 1277 to 1453 (DLVFLLDGSS…DELEQQRDEI (177 aa)). Threonine 1468 and threonine 1477 each carry an O-linked (GalNAc...) threonine glycan. Serine 1486 carries an O-linked (GalNAc...) serine glycan. Threonine 1487 carries an O-linked (GalNAc...) threonine glycan. Residues 1498–1665 (DVAFVLEGSD…TLPREAPDLV (168 aa)) form the VWFA 2 domain. A glycan (N-linked (GlcNAc...) (complex) asparagine) is linked at asparagine 1515. Residue asparagine 1574 is glycosylated (N-linked (GlcNAc...) asparagine). The cysteines at positions 1669 and 1670 are disulfide-linked. Residue threonine 1679 is glycosylated (O-linked (GalNAc...) threonine). Intrachain disulfides connect cysteine 1686–cysteine 1872, cysteine 1879–cysteine 1904, cysteine 1899–cysteine 1940, cysteine 1927–cysteine 2088, cysteine 1950–cysteine 2085, cysteine 1972–cysteine 2123, and cysteine 1993–cysteine 2001. One can recognise a VWFA 3; main binding site for collagens type I and III domain in the interval 1691-1871 (DVILLLDGSS…TLGNSFLHKL (181 aa)). The VWFD 4 domain maps to 1948 to 2124 (CVCTGSSTRH…TVQRPGQTCQ (177 aa)). An E2 region spans residues 2216–2261 (CPRHCDGNVSSCGDHPSEGCFCPPDKVMLEGSCVPEEACTQCIGED). Residues asparagine 2223 and asparagine 2290 are each glycosylated (N-linked (GlcNAc...) asparagine). The VWFC 1 domain occupies 2255–2328 (TQCIGEDGVQ…CCPEYECVCD (74 aa)). Threonine 2298 is a glycosylation site (O-linked (GalNAc...) threonine). N-linked (GlcNAc...) asparagine glycosylation is found at asparagine 2357 and asparagine 2400. Residues 2429-2495 (KVCVHRSTIY…HEGECCGRCL (67 aa)) form the VWFC 2 domain. The Cell attachment site signature appears at 2507-2509 (RGD). N-linked (GlcNAc...) asparagine glycans are attached at residues asparagine 2546 and asparagine 2585. Positions 2580 to 2645 (EACMLNGTVI…NTGECCGRCL (66 aa)) constitute a VWFC 3 domain. Intrachain disulfides connect cysteine 2724-cysteine 2774, cysteine 2739-cysteine 2788, cysteine 2750-cysteine 2804, and cysteine 2754-cysteine 2806. Positions 2724–2812 (CNDITARLQY…ECKCSPRKCS (89 aa)) constitute a CTCK domain. Residue asparagine 2790 is glycosylated (N-linked (GlcNAc...) asparagine).

As to quaternary structure, multimeric. Interacts with F8. In terms of processing, all cysteine residues are involved in intrachain or interchain disulfide bonds. N- and O-glycosylated. Plasma.

The protein localises to the secreted. Its subcellular location is the extracellular space. It is found in the extracellular matrix. In terms of biological role, important in the maintenance of hemostasis, it promotes adhesion of platelets to the sites of vascular injury by forming a molecular bridge between sub-endothelial collagen matrix and platelet-surface receptor complex GPIb-IX-V. Also acts as a chaperone for coagulation factor VIII, delivering it to the site of injury, stabilizing its heterodimeric structure and protecting it from premature clearance from plasma. The chain is von Willebrand factor (VWF) from Homo sapiens (Human).